A 379-amino-acid polypeptide reads, in one-letter code: MIISSSTDYREAARRRLPPFLFHYIDGGAYSEHTMRRNIDDLADLALRQRVLKSVGTVDISTTLFDEELAMPVVLAPVGLTGMYARRGEVQAARAAEKKGIPLTLSTVSVCPIEEVQAASNRPIWFQLYVLRDRGFMKNALERAWAAGIRKLVFTVDMPVPGARYRDAHSGMSGPNASLRRIIQAVMHPTWAIDVGLLGKPHDLGNVSAYRQQKTNLADYVGWLGENFDPSIGWKDLEWIRDFWKGPMIIKGILDPEDAKDAVRFGADGIIVSNHGGRQLDGVLSSARALPAIAAAVKGDLTILADSGIRSGLDVVRMIAQGADGVLIGRAFVYALAAAGQAGVENLLDLFAKEMRVAMTLTGARSIAEISPDSLVRGL.

An FMN hydroxy acid dehydrogenase domain is found at 1 to 379 (MIISSSTDYR…ISPDSLVRGL (379 aa)). Residue Tyr-24 participates in substrate binding. Ser-106 and Gln-127 together coordinate FMN. A substrate-binding site is contributed by Tyr-129. Position 155 (Thr-155) interacts with FMN. Arg-164 is a substrate binding site. An FMN-binding site is contributed by Lys-251. His-275 functions as the Proton acceptor in the catalytic mechanism. Arg-278 lines the substrate pocket. 306–330 (DSGIRSGLDVVRMIAQGADGVLIGR) lines the FMN pocket.

The protein belongs to the FMN-dependent alpha-hydroxy acid dehydrogenase family. Requires FMN as cofactor.

Its subcellular location is the cell inner membrane. It carries out the reaction (S)-lactate + A = pyruvate + AH2. In terms of biological role, catalyzes the conversion of L-lactate to pyruvate. Is coupled to the respiratory chain. The sequence is that of L-lactate dehydrogenase from Allorhizobium ampelinum (strain ATCC BAA-846 / DSM 112012 / S4) (Agrobacterium vitis (strain S4)).